Here is an 802-residue protein sequence, read N- to C-terminus: Serine/threonine-protein kinase zyg-8 (802 aa).

Positions 1 to 13 (MPQTSAWQLNDTT) are enriched in polar residues. The interval 1-102 (MPQTSAWQLN…SAPSTSSAHR (102 aa)) is disordered. A compositionally biased stretch (pro residues) spans 15–24 (RPPPPPPPPG). The segment covering 89 to 99 (SPSSSAPSTSS) has biased composition (low complexity). Doublecortin domains are found at residues 211-298 (KRLR…VDYS) and 340-423 (RIIK…ADDL). The segment at 430–470 (HKSVGSGTSSNMRRTSRRSTMPNRNESLRHDRSGSVIPDQD) is disordered. The segment covering 434 to 454 (GSGTSSNMRRTSRRSTMPNRN) has biased composition (low complexity). The Protein kinase domain occupies 482 to 743 (FQLVRLIGDG…AGELLNDEWM (262 aa)). ATP is bound by residues 488–496 (IGDGNTAVV) and Lys-512. The active-site Proton acceptor is the Asp-604.

The protein belongs to the protein kinase superfamily. CAMK Ser/Thr protein kinase family. CaMK subfamily. As to quaternary structure, interacts with tac-1. In terms of tissue distribution, expressed in AFD thermosensory neurons. Expressed in cells near the nerve ring, in motor neurons in the ventral nerve cord and in the six touch receptor neurons including ALML/R, PLML/R and AVM and PVM. Expressed in hypodermal and neural tissues and in the germline.

It localises to the cytoplasm. The protein localises to the cytoskeleton. It is found in the microtubule organizing center. The protein resides in the centrosome. Its subcellular location is the spindle. It carries out the reaction L-seryl-[protein] + ATP = O-phospho-L-seryl-[protein] + ADP + H(+). It catalyses the reaction L-threonyl-[protein] + ATP = O-phospho-L-threonyl-[protein] + ADP + H(+). Functionally, probable kinase. Kinase activity may be involved in positioning of spindle poles in meiosis and mitosis. Plays a role in spindle positioning during asymmetric division of one-cell stage embryos. Affects spindle position by promoting microtubule assembly during anaphase. Plays a role in the assembly and stability of oocyte spindle, perhaps balancing the forces in the spindle and maintaining their morphology during metaphase. Plays a role in cell division and in embryonic viability up until gastrulation. Required for neuronal morphology and polarity and restricting ectopic process outgrowth; probably as a result of a role in maintaining microtubule integrity. Involved in maintaining neuronal microtubule number, length and packing. May promote axonal and synaptic growth. Plays a role in regulating thermotaxis responses in AFD thermosensory neurons. Required for touch sensitivity in adult touch response receptor neurons. This Caenorhabditis elegans protein is Serine/threonine-protein kinase zyg-8.